Here is a 363-residue protein sequence, read N- to C-terminus: Holliday junction branch migration complex subunit RuvB (363 aa).

The interval 1-32 is disordered; that stretch reads MAIQTDSFAAAPAPSSGSTRRLISAAPTSPNE. Low complexity predominate over residues 7 to 18; it reads SFAAAPAPSSGS. A large ATPase domain (RuvB-L) region spans residues 13-200; it reads APSSGSTRRL…FGIVARLEFY (188 aa). ATP-binding positions include Leu39, Arg40, Gly81, Lys84, Thr85, Thr86, 147–149, Arg190, Tyr200, and Arg237; that span reads EDY. Thr85 is a binding site for Mg(2+). The segment at 201 to 271 is small ATPAse domain (RuvB-S); that stretch reads TPEELVRIVT…IAELALTMLD (71 aa). Residues 274-363 are head domain (RuvB-H); it reads PRGFDVMDRK…GPVGSDLFEG (90 aa). Arg329 and Arg334 together coordinate DNA.

It belongs to the RuvB family. Homohexamer. Forms an RuvA(8)-RuvB(12)-Holliday junction (HJ) complex. HJ DNA is sandwiched between 2 RuvA tetramers; dsDNA enters through RuvA and exits via RuvB. An RuvB hexamer assembles on each DNA strand where it exits the tetramer. Each RuvB hexamer is contacted by two RuvA subunits (via domain III) on 2 adjacent RuvB subunits; this complex drives branch migration. In the full resolvosome a probable DNA-RuvA(4)-RuvB(12)-RuvC(2) complex forms which resolves the HJ.

It is found in the cytoplasm. The catalysed reaction is ATP + H2O = ADP + phosphate + H(+). The RuvA-RuvB-RuvC complex processes Holliday junction (HJ) DNA during genetic recombination and DNA repair, while the RuvA-RuvB complex plays an important role in the rescue of blocked DNA replication forks via replication fork reversal (RFR). RuvA specifically binds to HJ cruciform DNA, conferring on it an open structure. The RuvB hexamer acts as an ATP-dependent pump, pulling dsDNA into and through the RuvAB complex. RuvB forms 2 homohexamers on either side of HJ DNA bound by 1 or 2 RuvA tetramers; 4 subunits per hexamer contact DNA at a time. Coordinated motions by a converter formed by DNA-disengaged RuvB subunits stimulates ATP hydrolysis and nucleotide exchange. Immobilization of the converter enables RuvB to convert the ATP-contained energy into a lever motion, pulling 2 nucleotides of DNA out of the RuvA tetramer per ATP hydrolyzed, thus driving DNA branch migration. The RuvB motors rotate together with the DNA substrate, which together with the progressing nucleotide cycle form the mechanistic basis for DNA recombination by continuous HJ branch migration. Branch migration allows RuvC to scan DNA until it finds its consensus sequence, where it cleaves and resolves cruciform DNA. The chain is Holliday junction branch migration complex subunit RuvB from Leptothrix cholodnii (strain ATCC 51168 / LMG 8142 / SP-6) (Leptothrix discophora (strain SP-6)).